A 235-amino-acid chain; its full sequence is Purine nucleoside phosphorylase DeoD-type (235 aa).

His-4 provides a ligand contact to a purine D-ribonucleoside. Residues Gly-20, Arg-24, Arg-43, and 87–90 (RVGT) each bind phosphate. A purine D-ribonucleoside contacts are provided by residues 180 to 182 (EME) and 204 to 205 (SD). The active-site Proton donor is the Asp-205.

Belongs to the PNP/UDP phosphorylase family. Homohexamer; trimer of homodimers.

The catalysed reaction is a purine D-ribonucleoside + phosphate = a purine nucleobase + alpha-D-ribose 1-phosphate. It carries out the reaction a purine 2'-deoxy-D-ribonucleoside + phosphate = a purine nucleobase + 2-deoxy-alpha-D-ribose 1-phosphate. In terms of biological role, catalyzes the reversible phosphorolytic breakdown of the N-glycosidic bond in the beta-(deoxy)ribonucleoside molecules, with the formation of the corresponding free purine bases and pentose-1-phosphate. This Oceanobacillus iheyensis (strain DSM 14371 / CIP 107618 / JCM 11309 / KCTC 3954 / HTE831) protein is Purine nucleoside phosphorylase DeoD-type.